Here is a 105-residue protein sequence, read N- to C-terminus: Thioredoxin (105 aa).

Positions 1-105 (ATMTLTDANF…LEAQLADVLQ (105 aa)) constitute a Thioredoxin domain. Cysteines 29 and 32 form a disulfide.

Its function is as follows. Participates in various redox reactions through the reversible oxidation of its active center dithiol to a disulfide and catalyzes dithiol-disulfide exchange reactions. The polypeptide is Thioredoxin (trxA) (Alicyclobacillus acidocaldarius subsp. acidocaldarius (Bacillus acidocaldarius)).